The chain runs to 428 residues: AP-1 complex subunit mu-1 (428 aa).

An MHD domain is found at 170 to 426 (KNEVFLDVIE…ITMAGEYELR (257 aa)).

Belongs to the adaptor complexes medium subunit family. Adaptor protein complex 1 (AP-1) is a heterotetramer composed of two large adaptins (gamma-type subunit and beta-type subunit), a medium adaptin (mu-type subunit) and a small adaptin (sigma-type subunit).

It localises to the golgi apparatus. It is found in the cytoplasmic vesicle. The protein resides in the clathrin-coated vesicle membrane. Functionally, subunit of clathrin-associated adaptor protein complex 1 that plays a role in protein sorting at the trans-Golgi network and early endosomes (TGN/EE). The AP complexes mediate the recruitment of clathrin to membranes and the recognition of sorting signals within the cytosolic tails of transmembrane cargo molecules. Functions redundantly with AP1M2 in multiple post-Golgi trafficking pathways leading from the TGN to the vacuole, the plasma membrane, and the cell-division plane. The polypeptide is AP-1 complex subunit mu-1 (AP1M1) (Arabidopsis thaliana (Mouse-ear cress)).